The primary structure comprises 109 residues: Nucleoid-associated protein Ping_2276 (109 aa).

This sequence belongs to the YbaB/EbfC family. Homodimer.

The protein resides in the cytoplasm. The protein localises to the nucleoid. Its function is as follows. Binds to DNA and alters its conformation. May be involved in regulation of gene expression, nucleoid organization and DNA protection. This chain is Nucleoid-associated protein Ping_2276, found in Psychromonas ingrahamii (strain DSM 17664 / CCUG 51855 / 37).